The sequence spans 510 residues: MIWHVQNENFILDSTRIFMKAFHLLLFDGSFIFPECILIFGLILLLMIDSTSDQKDIPWLYFISSTSLVMSITALLFRWREEPMISFSGNFQTNNFNEIFQFLILLCSTLCIPLSVEYIECTEMAITEFLLFVLTATLGGMFLCGANDLITIFVAPECFSLCSYLLSGYTKKDVRSNEATTKYLLMGGASSSILVHGFSWLYGSSGGEIELQEIVNGLINTQMYNSPGISIALIFITVGIGFKLSPAPSHQWTPDVYEGSPTPVVAFLSVTSKVAASASATRIFDIPFYFSSNEWHLLLEILAILSMILGNLIAITQTSMKRMLAYSSIGQIGYVIIGIIVGDSNGGYASMITYMLFYISMNLGTFACIVSFGLRTGTDNIRDYAGLYTKDAFLALSLALCLLSLGGLPPLAGFFGKLHLFWCGWQAGLYFLVSIGLLTSVVSIYYYLKIIKLLMTGRNQEITPHVQNYRRSPLRSNNSIELSMIVCVIASTIPGISMNPIIEIAQDTLF.

13 consecutive transmembrane segments (helical) span residues 24–44 (LLLF…GLIL), 57–77 (IPWL…ALLF), 99–119 (IFQF…VEYI), 124–144 (MAIT…MFLC), 149–169 (LITI…LSGY), 183–203 (YLLM…WLYG), 227–247 (PGIS…LSPA), 295–315 (WHLL…LIAI), 323–343 (MLAY…IVGD), 354–374 (YMLF…SFGL), 392–412 (AFLA…PPLA), 418–438 (LHLF…IGLL), and 482–502 (LSMI…NPII).

This sequence belongs to the complex I subunit 2 family. NDH is composed of at least 16 different subunits, 5 of which are encoded in the nucleus.

It localises to the plastid. The protein localises to the chloroplast thylakoid membrane. The catalysed reaction is a plastoquinone + NADH + (n+1) H(+)(in) = a plastoquinol + NAD(+) + n H(+)(out). It carries out the reaction a plastoquinone + NADPH + (n+1) H(+)(in) = a plastoquinol + NADP(+) + n H(+)(out). Its function is as follows. NDH shuttles electrons from NAD(P)H:plastoquinone, via FMN and iron-sulfur (Fe-S) centers, to quinones in the photosynthetic chain and possibly in a chloroplast respiratory chain. The immediate electron acceptor for the enzyme in this species is believed to be plastoquinone. Couples the redox reaction to proton translocation, and thus conserves the redox energy in a proton gradient. The chain is NAD(P)H-quinone oxidoreductase subunit 2 B, chloroplastic from Morus indica (Mulberry).